Reading from the N-terminus, the 775-residue chain is Acylamino-acid-releasing enzyme 1 (775 aa).

Active-site charge relay system residues include Ser-627, Asp-718, and His-750.

Belongs to the peptidase S9C family. Homotetramer.

It is found in the cytoplasm. It catalyses the reaction Cleavage of an N-acetyl or N-formyl amino acid from the N-terminus of a polypeptide.. Catalyzes the hydrolysis of the N-terminal peptide bond of an N-acetylated peptide to generate an N-acetylated amino acid and a peptide with a free N-terminus. The sequence is that of Acylamino-acid-releasing enzyme 1 from Oryza sativa subsp. japonica (Rice).